Here is a 257-residue protein sequence, read N- to C-terminus: Phycoerythrobilin:ferredoxin oxidoreductase (257 aa).

Belongs to the HY2 family.

The enzyme catalyses (3Z)-phycoerythrobilin + oxidized 2[4Fe-4S]-[ferredoxin] = 15,16-dihydrobiliverdin + reduced 2[4Fe-4S]-[ferredoxin] + 2 H(+). Catalyzes the two-electron reduction of the C2 and C3(1) diene system of 15,16-dihydrobiliverdin. In Prochlorococcus marinus (strain SARG / CCMP1375 / SS120), this protein is Phycoerythrobilin:ferredoxin oxidoreductase (pebB).